We begin with the raw amino-acid sequence, 247 residues long: Acetate transporter protein patA (247 aa).

Residue asparagine 20 is glycosylated (N-linked (GlcNAc...) asparagine). Helical transmembrane passes span 37 to 57 (PPITPIGSPTALGMGAFAIAF), 71 to 91 (AITNAYIGNCFFTAGLGLVLV), 106 to 126 (VFGGFGLFNLAFGAINAPAFG), 141 to 161 (ALGYFLLVWGVFVLFFTIAAM), 169 to 189 (AMLGTSQITYTLLAASYFAMA), and 202 to 222 (AAGAFGFVSGLLAWYVVAHLM).

Belongs to the acetate uptake transporter (AceTr) (TC 2.A.96) family.

Its subcellular location is the endoplasmic reticulum membrane. The protein operates within mycotoxin biosynthesis; patulin biosynthesis. In terms of biological role, acetate transporter protein; part of the gene cluster that mediates the biosynthesis of patulin, an acetate-derived tetraketide mycotoxin produced by several fungal species that shows antimicrobial properties against several bacteria. May be involved in the uptake of acetate, a substrate for the synthesis of 6-methylsalicylic acid by the polyketide synthase patK. In Aspergillus clavatus (strain ATCC 1007 / CBS 513.65 / DSM 816 / NCTC 3887 / NRRL 1 / QM 1276 / 107), this protein is Acetate transporter protein patA.